Consider the following 252-residue polypeptide: Chitooligosaccharide deacetylase (252 aa).

Mg(2+) contacts are provided by histidine 61 and histidine 125.

Belongs to the YdjC deacetylase family. ChbG subfamily. Homodimer. Mg(2+) is required as a cofactor.

It is found in the cytoplasm. It carries out the reaction N,N'-diacetylchitobiose + H2O = N-acetyl-beta-D-glucosaminyl-(1-&gt;4)-D-glucosamine + acetate. The enzyme catalyses diacetylchitobiose-6'-phosphate + H2O = N'-monoacetylchitobiose-6'-phosphate + acetate. Its pathway is glycan degradation; chitin degradation. Involved in the degradation of chitin. ChbG is essential for growth on the acetylated chitooligosaccharides chitobiose and chitotriose but is dispensable for growth on cellobiose and chitosan dimer, the deacetylated form of chitobiose. Deacetylation of chitobiose-6-P and chitotriose-6-P is necessary for both the activation of the chb promoter by the regulatory protein ChbR and the hydrolysis of phosphorylated beta-glucosides by the phospho-beta-glucosidase ChbF. Catalyzes the removal of only one acetyl group from chitobiose-6-P to yield monoacetylchitobiose-6-P, the inducer of ChbR and the substrate of ChbF. This chain is Chitooligosaccharide deacetylase, found in Salmonella typhi.